The following is a 286-amino-acid chain: Phycobilisome 32.1 kDa linker polypeptide, phycocyanin-associated, rod (286 aa).

A PBS-linker domain is found at 2-180 (AITTAASRLG…LYRGYANSDR (179 aa)). The region spanning 234-286 (DRVYRLEVTGIRSPGYPSVRRSSTVFIVPYERLSDKIQQVHKQGGKIVSVTSA) is the CpcD-like domain.

This sequence belongs to the phycobilisome linker protein family. In terms of assembly, associated with the phycobilisome, a hemidiscoidal structure that is composed of two distinct substructures: a core complex and a number of rods radiating from the core.

The protein resides in the cellular thylakoid membrane. Rod linker protein, associated with phycocyanin. Linker polypeptides determine the state of aggregation and the location of the disk-shaped phycobiliprotein units within the phycobilisome and modulate their spectroscopic properties in order to mediate a directed and optimal energy transfer. The polypeptide is Phycobilisome 32.1 kDa linker polypeptide, phycocyanin-associated, rod (cpcC) (Nostoc sp. (strain PCC 7120 / SAG 25.82 / UTEX 2576)).